Reading from the N-terminus, the 956-residue chain is Bifunctional glutamine synthetase adenylyltransferase/adenylyl-removing enzyme (956 aa).

Residues 1–450 (MENMSEQALP…YFKETVGGQE (450 aa)) form an adenylyl removase region. Residues 456-956 (EQWTAQLWSL…IYEQVLNNGQ (501 aa)) form an adenylyl transferase region.

This sequence belongs to the GlnE family. Mg(2+) serves as cofactor.

It carries out the reaction [glutamine synthetase]-O(4)-(5'-adenylyl)-L-tyrosine + phosphate = [glutamine synthetase]-L-tyrosine + ADP. The catalysed reaction is [glutamine synthetase]-L-tyrosine + ATP = [glutamine synthetase]-O(4)-(5'-adenylyl)-L-tyrosine + diphosphate. Its function is as follows. Involved in the regulation of glutamine synthetase GlnA, a key enzyme in the process to assimilate ammonia. When cellular nitrogen levels are high, the C-terminal adenylyl transferase (AT) inactivates GlnA by covalent transfer of an adenylyl group from ATP to specific tyrosine residue of GlnA, thus reducing its activity. Conversely, when nitrogen levels are low, the N-terminal adenylyl removase (AR) activates GlnA by removing the adenylyl group by phosphorolysis, increasing its activity. The regulatory region of GlnE binds the signal transduction protein PII (GlnB) which indicates the nitrogen status of the cell. In Shewanella loihica (strain ATCC BAA-1088 / PV-4), this protein is Bifunctional glutamine synthetase adenylyltransferase/adenylyl-removing enzyme.